The primary structure comprises 320 residues: uncharacterized protein (320 aa).

The Arf-GAP domain occupies 13–132 (ALVLKSLLRE…VLYPEIPSPE (120 aa)). The C4-type zinc finger occupies 28–52 (CADCKRNEQPRWASWNLGVFICIRC). 3 disordered regions span residues 153 to 212 (NTAS…STRQ), 227 to 261 (RPQV…YGAF), and 284 to 320 (NVTS…DVWK). Positions 154-176 (TASRSSSAHSVKSTSSATVTNVT) are enriched in low complexity. Composition is skewed to polar residues over residues 183 to 210 (SATT…APST) and 228 to 244 (PQVS…YQNL). 2 stretches are compositionally biased toward low complexity: residues 245–257 (PSPV…SSQP) and 295–310 (SPVQ…SLDS).

It is found in the cytoplasm. It localises to the golgi apparatus. Functionally, GTPase-activating protein for the ADP ribosylation factor family. This is an uncharacterized protein from Schizosaccharomyces pombe (strain 972 / ATCC 24843) (Fission yeast).